The chain runs to 83 residues: Putative snRNP Sm-like protein (83 aa).

The Sm domain occupies 9–81 (KPMDVLKSAL…VIFVSPSKGD (73 aa)).

The protein belongs to the snRNP Sm proteins family.

This Thermoplasma acidophilum (strain ATCC 25905 / DSM 1728 / JCM 9062 / NBRC 15155 / AMRC-C165) protein is Putative snRNP Sm-like protein.